A 297-amino-acid chain; its full sequence is Hydroxysqualene synthase (297 aa).

It belongs to the phytoene/squalene synthase family. HpnC subfamily.

The catalysed reaction is presqualene diphosphate + H2O = hydroxysqualene + diphosphate. It participates in secondary metabolite biosynthesis; hopanoid biosynthesis. Its function is as follows. Involved in the biosynthesis of the hopanoid precursor squalene (SQ) from farnesyl diphosphate (FPP). Catalyzes the second step, the conversion of presqualene diphosphate (PSPP) to hydroxysqualene (HSQ). The polypeptide is Hydroxysqualene synthase (Zymomonas mobilis subsp. mobilis (strain ATCC 31821 / ZM4 / CP4)).